Reading from the N-terminus, the 408-residue chain is Adenylosuccinate synthetase (408 aa).

GTP contacts are provided by residues glycine 12–lysine 18 and glycine 40–threonine 42. The Proton acceptor role is filled by aspartate 13. The Mg(2+) site is built by aspartate 13 and glycine 40. IMP-binding positions include aspartate 13 to lysine 16, asparagine 38 to histidine 41, threonine 121, arginine 135, glutamine 213, threonine 228, and arginine 292. The Proton donor role is filled by histidine 41. Substrate is bound at residue threonine 288–arginine 294. Residues arginine 294, lysine 320 to aspartate 322, and serine 393 to serine 395 contribute to the GTP site.

This sequence belongs to the adenylosuccinate synthetase family. In terms of assembly, homodimer. The cofactor is Mg(2+).

The protein resides in the cytoplasm. It carries out the reaction IMP + L-aspartate + GTP = N(6)-(1,2-dicarboxyethyl)-AMP + GDP + phosphate + 2 H(+). It functions in the pathway purine metabolism; AMP biosynthesis via de novo pathway; AMP from IMP: step 1/2. In terms of biological role, plays an important role in the de novo pathway of purine nucleotide biosynthesis. Catalyzes the first committed step in the biosynthesis of AMP from IMP. The chain is Adenylosuccinate synthetase from Thermus thermophilus (strain ATCC BAA-163 / DSM 7039 / HB27).